The chain runs to 226 residues: Transmembrane gamma-carboxyglutamic acid protein 4 (226 aa).

The first 17 residues, methionine 1–glycine 17, serve as a signal peptide directing secretion. Residues phenylalanine 18 to arginine 49 constitute a propeptide that is removed on maturation. Residues leucine 50–aspartate 113 lie on the Extracellular side of the membrane. The Gla domain occupies tyrosine 52 to alanine 98. A disulfide bridge connects residues cysteine 69 and cysteine 74. A 4-carboxyglutamate modification is found at glutamate 72. Residues valine 114–leucine 134 traverse the membrane as a helical segment. Residues glycine 135 to histidine 226 are Cytoplasmic-facing. The residue at position 163 (serine 163) is a Phosphoserine. The LPXY motif; mediates binding to WW domain-containing proteins signature appears at leucine 186–tyrosine 189. Residues proline 204 to tyrosine 207 carry the PPXY motif; mediates binding to WW domain-containing proteins motif.

This sequence belongs to the commissureless family. As to quaternary structure, interacts (via cytoplasmic domain) with WW domain-containing proteins MAGI1, MAGI3, NEDD4, NEDD4L, WWTR1/TAZ and YAP1. Gamma-carboxyglutamate residues are formed by vitamin K dependent carboxylation. These residues are essential for the binding of calcium. As to expression, widely expressed with highest levels in kidney.

The protein resides in the endoplasmic reticulum-Golgi intermediate compartment membrane. It localises to the cell membrane. In terms of biological role, may control axon guidance across the CNS. Prevents the delivery of ROBO1 at the cell surface and down-regulates its expression. The sequence is that of Transmembrane gamma-carboxyglutamic acid protein 4 from Homo sapiens (Human).